The primary structure comprises 699 residues: SPS-sensor serine protease component SSY5 (699 aa).

Disordered stretches follow at residues 1–113 (MVRF…LQGF) and 129–158 (VKEEESQDTQNTLDVSSSTSSTLATSGNAR). Residues 1–381 (MVRFFGLNKE…YCVKDYIKKA (381 aa)) constitute a propeptide that is removed on maturation. The segment covering 8-18 (NKEKNEEKENT) has biased composition (basic and acidic residues). Residues 24–38 (NEQNAAETSSSNVSG) are compositionally biased toward polar residues. Residues 39–51 (NEERIDPNSRDTN) show a composition bias toward basic and acidic residues. Residues 61-78 (STTFGSSIQSSSIFSRGR) show a composition bias toward low complexity. Positions 83 to 93 (TGASSSMATSE) are enriched in polar residues. Low complexity predominate over residues 144–154 (SSSTSSTLATS). A serine protease region spans residues 459–699 (FAITCAHVVL…QWDIDPQLDG (241 aa)). Catalysis depends on charge relay system residues His465, Asp545, and Ser640.

It belongs to the peptidase S64 family. In terms of assembly, component of the plasma membrane SPS (SSY1-PTR3-SSY5) amino acid sensor complex. The propeptide is autoproteolytically cleaved from the catalytic domain but remains associated, forming an inactive protease complex. This processing occurs even in the absence of signaling.

The protein resides in the cell membrane. Its function is as follows. Protease component of the SPS-sensor system, which regulates the expression of several amino acid-metabolizing enzymes and amino acid- and peptide-permeases in response to extracellular amino acid levels by controlling the activity of two transcription factors, STP1 and STP2. Catalyzes the activation of these transcription factors, which are synthesized as latent cytoplasmic precursors, by proteolytic removal of an N-terminal inhibitory domain containing cytoplasmic retention motifs. SSY5 binds as an inactive protease complex to STP1. In response to extracellular amino acids and dependent on the other SPS-sensor components, the inhibitory propeptide is induced to dissociate, and thereby enables the catalytic domain to process STP1. The polypeptide is SPS-sensor serine protease component SSY5 (SSY5) (Saccharomyces cerevisiae (strain AWRI1631) (Baker's yeast)).